A 200-amino-acid chain; its full sequence is Signal peptidase complex catalytic subunit SEC11 (200 aa).

Residues 1-15 (MFAELAPYLSNPRQT) are Cytoplasmic-facing. The chain crosses the membrane as a helical; Signal-anchor for type II membrane protein span at residues 16–33 (LAQILNFALVLSTAFMGW). Residues 34-200 (KALSVYTNSS…MGVMVMLQRE (167 aa)) lie on the Lumenal side of the membrane. A glycan (N-linked (GlcNAc...) asparagine) is linked at Asn41. Catalysis depends on charge relay system residues Ser53 and His92. Residues 101-131 (GDGGKKSQRRLEKEADKRSGPGLSSPISHQM) form a disordered region. A compositionally biased stretch (basic and acidic residues) spans 103 to 119 (GGKKSQRRLEKEADKRS). The active-site Charge relay system is the Asp142. The interval 186 to 197 (VLLGIMGVMVML) is C-terminal short (CTS) helix.

The protein belongs to the peptidase S26B family. In terms of assembly, component of the signal peptidase complex (SPC) composed of a catalytic subunit SEC11 and three accessory subunits SPC1, SPC2 and SPC3. The complex induces a local thinning of the ER membrane which is used to measure the length of the signal peptide (SP) h-region of protein substrates. This ensures the selectivity of the complex towards h-regions shorter than 18-20 amino acids. SPC associates with the translocon complex.

The protein resides in the endoplasmic reticulum membrane. The catalysed reaction is Cleavage of hydrophobic, N-terminal signal or leader sequences from secreted and periplasmic proteins.. In terms of biological role, catalytic component of the signal peptidase complex (SPC) which catalyzes the cleavage of N-terminal signal sequences from nascent proteins as they are translocated into the lumen of the endoplasmic reticulum. Specifically cleaves N-terminal signal peptides that contain a hydrophobic alpha-helix (h-region) shorter than 18-20 amino acids. The chain is Signal peptidase complex catalytic subunit SEC11 (SEC11) from Arthroderma gypseum (strain ATCC MYA-4604 / CBS 118893) (Microsporum gypseum).